Consider the following 102-residue polypeptide: Small ribosomal subunit protein uS10 (102 aa).

The protein belongs to the universal ribosomal protein uS10 family. Part of the 30S ribosomal subunit.

Involved in the binding of tRNA to the ribosomes. The polypeptide is Small ribosomal subunit protein uS10 (Fervidobacterium nodosum (strain ATCC 35602 / DSM 5306 / Rt17-B1)).